A 387-amino-acid chain; its full sequence is 1,3-propanediol dehydrogenase (387 aa).

The protein belongs to the iron-containing alcohol dehydrogenase family. Homooctamer. It depends on Fe cation as a cofactor.

The enzyme catalyses propane-1,3-diol + NAD(+) = 3-hydroxypropanal + NADH + H(+). This Klebsiella pneumoniae protein is 1,3-propanediol dehydrogenase (dhaT).